The primary structure comprises 87 residues: Toxin Cll5c (87 aa).

The signal sequence occupies residues 1-19 (MNSLLMITACLVLFGTVWA). In terms of domain architecture, LCN-type CS-alpha/beta spans 20 to 85 (KEGYLVNKST…TYPLPNKSCS (66 aa)). Intrachain disulfides connect C31-C84, C35-C60, C44-C65, and C48-C67. Positions 86 to 87 (KK) are cleaved as a propeptide — removed by a carboxypeptidase.

This sequence belongs to the long (4 C-C) scorpion toxin superfamily. Sodium channel inhibitor family. Beta subfamily. In terms of tissue distribution, expressed by the venom gland.

It is found in the secreted. In terms of biological role, beta toxins bind voltage-independently at site-4 of sodium channels (Nav) and shift the voltage of activation toward more negative potentials thereby affecting sodium channel activation and promoting spontaneous and repetitive firing. The polypeptide is Toxin Cll5c (Centruroides limpidus (Mexican scorpion)).